Here is a 410-residue protein sequence, read N- to C-terminus: Cysteine desulfurase IscS (410 aa).

Pyridoxal 5'-phosphate is bound by residues 80–81 (AT), Asn160, Gln188, and 208–210 (SGH). Lys211 is subject to N6-(pyridoxal phosphate)lysine. Residue Thr248 coordinates pyridoxal 5'-phosphate. The active-site Cysteine persulfide intermediate is the Cys334. Position 334 (Cys334) interacts with [2Fe-2S] cluster.

Belongs to the class-V pyridoxal-phosphate-dependent aminotransferase family. NifS/IscS subfamily. In terms of assembly, homodimer. Forms a heterotetramer with IscU, interacts with other sulfur acceptors. Pyridoxal 5'-phosphate serves as cofactor.

The protein resides in the cytoplasm. The enzyme catalyses (sulfur carrier)-H + L-cysteine = (sulfur carrier)-SH + L-alanine. It functions in the pathway cofactor biosynthesis; iron-sulfur cluster biosynthesis. Master enzyme that delivers sulfur to a number of partners involved in Fe-S cluster assembly, tRNA modification or cofactor biosynthesis. Catalyzes the removal of elemental sulfur atoms from cysteine to produce alanine. Functions as a sulfur delivery protein for Fe-S cluster synthesis onto IscU, an Fe-S scaffold assembly protein, as well as other S acceptor proteins. The sequence is that of Cysteine desulfurase IscS from Rickettsia conorii (strain ATCC VR-613 / Malish 7).